The primary structure comprises 162 residues: Phycoerythrocyanin alpha chain (162 aa).

Residue Cys-84 participates in (15Z)-phycoviolobilin binding.

It belongs to the phycobiliprotein family. Heterodimer of an alpha and a beta chain. Post-translationally, contains one covalently linked bilin chromophore.

The protein localises to the cellular thylakoid membrane. Its function is as follows. Light-harvesting photosynthetic bile pigment-protein from the phycobiliprotein complex. The polypeptide is Phycoerythrocyanin alpha chain (pecA) (Nostoc sp. (strain PCC 7120 / SAG 25.82 / UTEX 2576)).